Reading from the N-terminus, the 125-residue chain is MAEKIAKKLNINEKTVVECKEFEVIEGNLDNSLWIMHINNEFKIVLDVEEYMKLMETMKNVMKENFELKLEKAILSEFPVDYDDVKAVVLEEMKRDENASISEILNKVKLEHPNLFYNLDLEKIF.

It belongs to the UPF0763 family.

This chain is UPF0763 protein NAMH_0545, found in Nautilia profundicola (strain ATCC BAA-1463 / DSM 18972 / AmH).